The chain runs to 204 residues: Transmembrane protein 253 (204 aa).

Transmembrane regions (helical) follow at residues 33 to 53 (LVLAVSQVWLAIAMVPFTISV), 62 to 82 (LVTALPLWPGASGLLTGIITL), 96 to 116 (MMISNTFNLILGFVAVVIEVM), and 138 to 158 (LSAEAFTLAGVLVSTYALFLL). Residues 184–204 (EEVSGLENGPVVASTGNRTDE) are disordered.

The protein resides in the membrane. This is Transmembrane protein 253 (Tmem253) from Mus musculus (Mouse).